We begin with the raw amino-acid sequence, 415 residues long: Phosphoglycerate kinase (415 aa).

Substrate is bound by residues 24 to 26, Arg-39, 62 to 65, Arg-121, and Arg-161; these read DLN and HLGR. ATP-binding positions include Lys-211, Gly-307, Glu-338, and 367 to 370; that span reads GGDS.

The protein belongs to the phosphoglycerate kinase family. In terms of assembly, monomer.

The protein resides in the cytoplasm. It carries out the reaction (2R)-3-phosphoglycerate + ATP = (2R)-3-phospho-glyceroyl phosphate + ADP. It functions in the pathway carbohydrate degradation; glycolysis; pyruvate from D-glyceraldehyde 3-phosphate: step 2/5. In Micrococcus luteus (strain ATCC 4698 / DSM 20030 / JCM 1464 / CCM 169 / CCUG 5858 / IAM 1056 / NBRC 3333 / NCIMB 9278 / NCTC 2665 / VKM Ac-2230) (Micrococcus lysodeikticus), this protein is Phosphoglycerate kinase.